A 332-amino-acid polypeptide reads, in one-letter code: Ribonucleoside-diphosphate reductase small chain C (332 aa).

Fe cation-binding residues include D76, E107, and H110. Residue Y114 is part of the active site. Residues E169, E203, and H206 each coordinate Fe cation.

The protein belongs to the ribonucleoside diphosphate reductase small chain family. Homodimer and heterodimer with RNR2A. Heterotetramer of two R1 and two R2 chains. Interacts with CSN7 (via C-terminal tail). Requires Fe cation as cofactor. As to expression, expressed in roots, cauline and rosette leaves, stems and flowers.

The protein resides in the cytoplasm. It is found in the nucleus. The enzyme catalyses a 2'-deoxyribonucleoside 5'-diphosphate + [thioredoxin]-disulfide + H2O = a ribonucleoside 5'-diphosphate + [thioredoxin]-dithiol. In terms of biological role, provides the precursors necessary for DNA synthesis. Catalyzes the biosynthesis of deoxyribonucleotides from the corresponding ribonucleotides. Involved in DNA damage repair and programmed cell death inhibition. This Arabidopsis thaliana (Mouse-ear cress) protein is Ribonucleoside-diphosphate reductase small chain C (TSO2).